A 78-amino-acid polypeptide reads, in one-letter code: Pro-glucagon (78 aa).

This sequence belongs to the glucagon family.

The protein resides in the secreted. In terms of biological role, plays a key role in glucose metabolism and homeostasis. Regulates blood glucose by increasing gluconeogenesis and decreasing glycolysis. This is Pro-glucagon (gcg) from Atractosteus spatula (Alligator gar).